A 352-amino-acid polypeptide reads, in one-letter code: Minor capsid protein P14 (352 aa).

The interval 122 to 214 (YNEPAPKPKP…RPARRCDENP (93 aa)) is disordered. The span at 129 to 145 (PKPKPKPKPAPKPKPAP) shows a compositional bias: basic residues. Over residues 146 to 204 (KPKPAPKPAPKPAPKPAPKPAPKPAPKPAPKPAPEPAPEPAPEPAPKPAPEPAPEPAPI) the composition is skewed to pro residues. The tract at residues 244-264 (WWLWGGIAILVIVLMIGGYFI) is hydrophobic.

In terms of assembly, interacts with the major capsid protein.

The protein resides in the virion. Functionally, one of the minor capsid proteins that constitute a network internal to the major capsid proteins and outside the lipid membrane. The minor capsid protein P14 does not serve a cross-linking function between neighboring capsomers, it may play a role in the viral capsid assembly. The chain is Minor capsid protein P14 from Chlorella (PBCV-1).